The primary structure comprises 441 residues: Ribulose bisphosphate carboxylase large chain (441 aa).

At lysine 5 the chain carries N6,N6,N6-trimethyllysine. Substrate-binding residues include asparagine 114 and threonine 164. The active-site Proton acceptor is lysine 166. Lysine 168 lines the substrate pocket. Mg(2+)-binding residues include lysine 192, aspartate 194, and glutamate 195. The residue at position 192 (lysine 192) is an N6-carboxylysine. The active-site Proton acceptor is histidine 285. Positions 286, 318, and 370 each coordinate substrate.

It belongs to the RuBisCO large chain family. Type I subfamily. Heterohexadecamer of 8 large chains and 8 small chains; disulfide-linked. The disulfide link is formed within the large subunit homodimers. It depends on Mg(2+) as a cofactor. The disulfide bond which can form in the large chain dimeric partners within the hexadecamer appears to be associated with oxidative stress and protein turnover.

Its subcellular location is the plastid. The protein localises to the chloroplast. The enzyme catalyses 2 (2R)-3-phosphoglycerate + 2 H(+) = D-ribulose 1,5-bisphosphate + CO2 + H2O. It catalyses the reaction D-ribulose 1,5-bisphosphate + O2 = 2-phosphoglycolate + (2R)-3-phosphoglycerate + 2 H(+). RuBisCO catalyzes two reactions: the carboxylation of D-ribulose 1,5-bisphosphate, the primary event in carbon dioxide fixation, as well as the oxidative fragmentation of the pentose substrate in the photorespiration process. Both reactions occur simultaneously and in competition at the same active site. The protein is Ribulose bisphosphate carboxylase large chain of Glycyrrhiza echinata (Licorice).